The chain runs to 565 residues: NAD-dependent malic enzyme (565 aa).

Tyrosine 104 serves as the catalytic Proton donor. Arginine 157 serves as a coordination point for NAD(+). Lysine 175 acts as the Proton acceptor in catalysis. A divalent metal cation-binding residues include glutamate 246, aspartate 247, and aspartate 270. NAD(+) contacts are provided by aspartate 270 and asparagine 418.

The protein belongs to the malic enzymes family. In terms of assembly, homotetramer. Mg(2+) is required as a cofactor. It depends on Mn(2+) as a cofactor.

The catalysed reaction is (S)-malate + NAD(+) = pyruvate + CO2 + NADH. It carries out the reaction oxaloacetate + H(+) = pyruvate + CO2. This is NAD-dependent malic enzyme from Shigella flexneri serotype 5b (strain 8401).